A 37-amino-acid chain; its full sequence is Large ribosomal subunit protein bL36 (37 aa).

Belongs to the bacterial ribosomal protein bL36 family.

The sequence is that of Large ribosomal subunit protein bL36 from Vesicomyosocius okutanii subsp. Calyptogena okutanii (strain HA).